Consider the following 367-residue polypeptide: Putrescine-binding periplasmic protein SpuD (367 aa).

The N-terminal stretch at 1–24 (MMKRFGKTLLALTLAGSVAGMAQA) is a signal peptide. Putrescine is bound at residue 36-37 (SD). Residues C173 and C236 are joined by a disulfide bond. 2 residues coordinate putrescine: D244 and D275.

This sequence belongs to the bacterial solute-binding protein PotD/PotF family.

The protein resides in the periplasm. The protein localises to the secreted. Its function is as follows. Putrescine-binding protein probably required for putrescine uptake into cells. Binds putrescine with high affinity, spermidine with relatively low affinity. Does not bind cadaverine or spermine. Putrescine binding induces large inter-domain conformational changes. This is Putrescine-binding periplasmic protein SpuD (spuD) from Pseudomonas aeruginosa (strain UCBPP-PA14).